We begin with the raw amino-acid sequence, 119 residues long: MPRVKRGVTARARHKKIIKLAKGYRGRRNNVYRIAKQAVMRAGQYAYRDRRNKKRVFRALWITRINAAVRQHDMTYSVFINGLKKASIELDRKVLADMAVFDKAAFAAIVQQVKAAVAA.

This sequence belongs to the bacterial ribosomal protein bL20 family.

Functionally, binds directly to 23S ribosomal RNA and is necessary for the in vitro assembly process of the 50S ribosomal subunit. It is not involved in the protein synthesizing functions of that subunit. The protein is Large ribosomal subunit protein bL20 of Burkholderia ambifaria (strain MC40-6).